We begin with the raw amino-acid sequence, 132 residues long: Small ribosomal subunit protein uS8 (132 aa).

This sequence belongs to the universal ribosomal protein uS8 family. As to quaternary structure, part of the 30S ribosomal subunit. Contacts proteins S5 and S12.

One of the primary rRNA binding proteins, it binds directly to 16S rRNA central domain where it helps coordinate assembly of the platform of the 30S subunit. This chain is Small ribosomal subunit protein uS8, found in Lysinibacillus sphaericus (strain C3-41).